Here is a 228-residue protein sequence, read N- to C-terminus: Cytokinin riboside 5'-monophosphate phosphoribohydrolase LOG5 (228 aa).

Residues glutamate 79, 97–98 (RK), and 114–120 (GYGTLEE) contribute to the substrate site.

This sequence belongs to the LOG family. As to expression, expressed in roots and shoots. Detected in vascular tissues of roots, cotyledons, and leaves, axillary buds, immature and mature flowers, fruit abscission zones and ovules.

Its subcellular location is the cytoplasm. It localises to the nucleus. It carries out the reaction N(6)-(dimethylallyl)adenosine 5'-phosphate + H2O = N(6)-dimethylallyladenine + D-ribose 5-phosphate. It catalyses the reaction 9-ribosyl-trans-zeatin 5'-phosphate + H2O = trans-zeatin + D-ribose 5-phosphate. Cytokinin-activating enzyme working in the direct activation pathway. Phosphoribohydrolase that converts inactive cytokinin nucleotides to the biologically active free-base forms. This chain is Cytokinin riboside 5'-monophosphate phosphoribohydrolase LOG5 (LOG5), found in Arabidopsis thaliana (Mouse-ear cress).